Reading from the N-terminus, the 194-residue chain is MYLDQIKAELVEAQDVLNKFISDENNIKLIQEAALLISNSFKQGGKVLSCGNGGSHCDAMHFAEELTGRYRENRPGYPAIAISDASHLSCVSNDFGYEYVFSRYVEAVGQKGDVLFGLSTSGNSKNILNAIEAAKTKGMKVIAMTGKDGGKMAGLADVEIRVPHFRYADRIQEIHIKVIHILMMLIEFEMAKQA.

The region spanning 37 to 194 (ISNSFKQGGK…LIEFEMAKQA (158 aa)) is the SIS domain. Residue 52 to 54 (NGG) coordinates substrate. Zn(2+) is bound by residues His61 and Glu65. Substrate is bound by residues Glu65, 93–94 (ND), 119–121 (STS), Ser124, and Gln172. 2 residues coordinate Zn(2+): Gln172 and His180.

The protein belongs to the SIS family. GmhA subfamily. Homotetramer. The cofactor is Zn(2+).

Its subcellular location is the cytoplasm. It carries out the reaction 2 D-sedoheptulose 7-phosphate = D-glycero-alpha-D-manno-heptose 7-phosphate + D-glycero-beta-D-manno-heptose 7-phosphate. It participates in carbohydrate biosynthesis; D-glycero-D-manno-heptose 7-phosphate biosynthesis; D-glycero-alpha-D-manno-heptose 7-phosphate and D-glycero-beta-D-manno-heptose 7-phosphate from sedoheptulose 7-phosphate: step 1/1. Functionally, catalyzes the isomerization of sedoheptulose 7-phosphate in D-glycero-D-manno-heptose 7-phosphate. This chain is Phosphoheptose isomerase, found in Haemophilus influenzae (strain 86-028NP).